The following is a 437-amino-acid chain: Transcription factor 12 (437 aa).

Disordered stretches follow at residues 1–68, 80–123, and 244–335; these read EFHD…QTGD, PDHT…YENS, and ASNT…ERRM. Positions 13 to 37 are enriched in polar residues; that stretch reads VSPTDISTSLPPMSSFHRGSTSSSP. Thr44 carries the post-translational modification Phosphothreonine. Ser64 bears the Phosphoserine mark. Residues 83-94 show a composition bias toward low complexity; that stretch reads TSSSFPSNPSTP. Composition is skewed to polar residues over residues 95 to 107 and 114 to 123; these read VGSPSPLTGTSQW and APSSPSYENS. 2 stretches are compositionally biased toward basic and acidic residues: residues 273–285 and 291–306; these read IKTENKEKDENLH and DDMKSDDESSQKDIKV. Lys274 is covalently cross-linked (Glycyl lysine isopeptide (Lys-Gly) (interchain with G-Cter in SUMO2)). Phosphoserine is present on Ser295. A Glycyl lysine isopeptide (Lys-Gly) (interchain with G-Cter in SUMO2) cross-link involves residue Lys305. Thr312 bears the Phosphothreonine mark. Residues Ser313 and Ser314 each carry the phosphoserine modification. The segment covering 323-335 has biased composition (basic and acidic residues); that stretch reads PEQKIEREKERRM. The region spanning 332-385 is the bHLH domain; that stretch reads ERRMANNARERLRVRDINEAFKELGRMCQLHLKSEKPQTKLLILHQAVAVILSL. Residues Lys364 and Lys408 each participate in a glycyl lysine isopeptide (Lys-Gly) (interchain with G-Cter in SUMO2) cross-link. Positions 387-410 are class A specific domain; that stretch reads QQVRERNLNPKAACLKRREEEKVS. The disordered stretch occupies residues 405–437; the sequence is EEEKVSAASAEPPTTLPGTHPGLSETTNPMGHL. A compositionally biased stretch (low complexity) spans 416 to 427; it reads PPTTLPGTHPGL. The span at 428–437 shows a compositional bias: polar residues; the sequence is SETTNPMGHL.

In terms of assembly, efficient DNA binding requires dimerization with another bHLH protein. Forms homo- or heterooligomers with myogenin, E12 and ITF2 proteins. Interacts with NEUROD2. Interacts with PTF1A. Interacts with RUNX1T1. Interacts with BHLHA9.

It localises to the nucleus. In terms of biological role, transcriptional regulator. Involved in the initiation of neuronal differentiation. Activates transcription by binding to the E box (5'-CANNTG-3'). Participates in the control of inducible RP4 gene expression in salivary cells. Binds to the RIPE3 element of the insulin II promoter. May be involved in the functional network that regulates the development of the GnRH axis. This Mesocricetus auratus (Golden hamster) protein is Transcription factor 12 (TCF12).